Consider the following 1021-residue polypeptide: Peroxisomal ATPase PEX6 (1021 aa).

ATP is bound at residue 763–770 (GPPGTGKT).

It belongs to the AAA ATPase family. Interacts with PEX1; forming the PEX1-PEX6 AAA ATPase complex, which is composed of a heterohexamer formed by a trimer of PEX1-PEX6 dimers.

The protein localises to the cytoplasm. The protein resides in the cytosol. It is found in the peroxisome membrane. The catalysed reaction is ATP + H2O = ADP + phosphate + H(+). In terms of biological role, component of the PEX1-PEX6 AAA ATPase complex, a protein dislocase complex that mediates the ATP-dependent extraction of the PEX5 receptor from peroxisomal membranes, an essential step for PEX5 recycling. Specifically recognizes PEX5 monoubiquitinated at 'Cys-6', and pulls it out of the peroxisome lumen through the PEX2-PEX10-PEX12 retrotranslocation channel. Extraction by the PEX1-PEX6 AAA ATPase complex is accompanied by unfolding of the TPR repeats and release of bound cargo from PEX5. The protein is Peroxisomal ATPase PEX6 (PEX6) of Eremothecium gossypii (strain ATCC 10895 / CBS 109.51 / FGSC 9923 / NRRL Y-1056) (Yeast).